The primary structure comprises 115 residues: Large ribosomal subunit protein bL19 (115 aa).

The protein belongs to the bacterial ribosomal protein bL19 family.

This protein is located at the 30S-50S ribosomal subunit interface and may play a role in the structure and function of the aminoacyl-tRNA binding site. This is Large ribosomal subunit protein bL19 from Caldanaerobacter subterraneus subsp. tengcongensis (strain DSM 15242 / JCM 11007 / NBRC 100824 / MB4) (Thermoanaerobacter tengcongensis).